The sequence spans 180 residues: UPF0340 protein BLi03936/BL03990 (180 aa).

The protein belongs to the UPF0340 family.

The sequence is that of UPF0340 protein BLi03936/BL03990 from Bacillus licheniformis (strain ATCC 14580 / DSM 13 / JCM 2505 / CCUG 7422 / NBRC 12200 / NCIMB 9375 / NCTC 10341 / NRRL NRS-1264 / Gibson 46).